A 305-amino-acid chain; its full sequence is Peroxisome assembly protein 26 (305 aa).

Residues 1 to 20 (MKSDSSTSAAPLRGLGGPLR) form a disordered region. The Cytoplasmic segment spans residues 1–246 (MKSDSSTSAA…RQLWDSAVSH (246 aa)). The helical; Signal-anchor for type II membrane protein transmembrane segment at 247 to 267 (FFSLPFKKSLLAALILCLLVV) threads the bilayer. Residues 268-305 (RFDPASPSSLHFLYKLAQLFRWIRKAAFSRLYQLRIRD) lie on the Peroxisomal matrix side of the membrane.

It belongs to the peroxin-26 family. Interacts (via its cytoplasmic domain) with PEX6; interaction is direct and is ATP-dependent. Interacts with PEX1; interaction is indirect and is mediated via interaction with PEX6. In terms of tissue distribution, widely expressed. Highly expressed in kidney, liver, brain and skeletal muscles. Expressed at intermediate level in pancreas, placenta and heart. Weakly expressed in lung.

It localises to the peroxisome membrane. Peroxisomal docking factor that anchors PEX1 and PEX6 to peroxisome membranes. PEX26 is therefore required for the formation of the PEX1-PEX6 AAA ATPase complex, a complex that mediates the extraction of the PEX5 receptor from peroxisomal membrane. This is Peroxisome assembly protein 26 from Homo sapiens (Human).